The chain runs to 745 residues: 5-methyltetrahydropteroyltriglutamate--homocysteine methyltransferase (745 aa).

5-methyltetrahydropteroyltri-L-glutamate contacts are provided by residues arginine 16–lysine 19 and lysine 110. L-homocysteine contacts are provided by residues isoleucine 420–serine 422 and glutamate 473. L-methionine is bound by residues isoleucine 420–serine 422 and glutamate 473. 5-methyltetrahydropteroyltri-L-glutamate is bound at residue tryptophan 550. Aspartate 588 contacts L-homocysteine. Aspartate 588 lines the L-methionine pocket. Glutamate 594 contributes to the 5-methyltetrahydropteroyltri-L-glutamate binding site. The Zn(2+) site is built by histidine 630, cysteine 632, and glutamate 654. Catalysis depends on histidine 683, which acts as the Proton donor. Cysteine 715 serves as a coordination point for Zn(2+).

Belongs to the vitamin-B12 independent methionine synthase family. Requires Zn(2+) as cofactor.

The enzyme catalyses 5-methyltetrahydropteroyltri-L-glutamate + L-homocysteine = tetrahydropteroyltri-L-glutamate + L-methionine. Its pathway is amino-acid biosynthesis; L-methionine biosynthesis via de novo pathway; L-methionine from L-homocysteine (MetE route): step 1/1. Functionally, catalyzes the transfer of a methyl group from 5-methyltetrahydrofolate to homocysteine resulting in methionine formation. The sequence is that of 5-methyltetrahydropteroyltriglutamate--homocysteine methyltransferase from Streptococcus agalactiae serotype III (strain NEM316).